The following is a 76-amino-acid chain: Large ribosomal subunit protein bL31 (76 aa).

Cys-16, Cys-18, Cys-37, and Cys-40 together coordinate Zn(2+).

This sequence belongs to the bacterial ribosomal protein bL31 family. Type A subfamily. As to quaternary structure, part of the 50S ribosomal subunit. It depends on Zn(2+) as a cofactor.

Functionally, binds the 23S rRNA. This Maridesulfovibrio salexigens (strain ATCC 14822 / DSM 2638 / NCIMB 8403 / VKM B-1763) (Desulfovibrio salexigens) protein is Large ribosomal subunit protein bL31.